Consider the following 216-residue polypeptide: Regulator of G-protein signaling 19 (216 aa).

Residues 1 to 19 (MPTPHEAEKQHTGPEEADR) show a composition bias toward basic and acidic residues. The segment at 1 to 30 (MPTPHEAEKQHTGPEEADRPPSMSSHDAAP) is disordered. 2 positions are modified to phosphoserine: Ser24 and Ser97. Residues 90 to 206 (SFDKLMHSPT…LTSPTYRSLL (117 aa)) form the RGS domain. Ser151 is subject to Phosphoserine; by MAPK1 and MAPK3. The tract at residues 207–216 (LQGAPQSSEA) is interaction with GIPC.

As to quaternary structure, interacts with GIPC PDZ domain. Interacts with GNAO1. In terms of processing, fatty acylated. Heavily palmitoylated in the cysteine string motif. Phosphorylated, mainly on serine residues.

The protein resides in the membrane. Functionally, inhibits signal transduction by increasing the GTPase activity of G protein alpha subunits thereby driving them into their inactive GDP-bound form. Binds to G-alpha subfamily 1 members, with the order G(i)a3 &gt; G(i)a1 &gt; G(o)a &gt;&gt; G(z)a/G(i)a2. Activity on G(z)-alpha is inhibited by phosphorylation and palmitoylation of the G-protein. In Mus musculus (Mouse), this protein is Regulator of G-protein signaling 19 (Rgs19).